Reading from the N-terminus, the 617-residue chain is Glutamine--fructose-6-phosphate aminotransferase [isomerizing] (617 aa).

The active-site Nucleophile; for GATase activity is the Cys-2. A Glutamine amidotransferase type-2 domain is found at 2–222; that stretch reads CGIIGLAFAE…DGEFGWISPE (221 aa). SIS domains follow at residues 293–432 and 466–607; these read AAGL…EAGR and AASL…PDKP. Residue Lys-612 is the For Fru-6P isomerization activity of the active site.

As to quaternary structure, homodimer.

The protein resides in the cytoplasm. The enzyme catalyses D-fructose 6-phosphate + L-glutamine = D-glucosamine 6-phosphate + L-glutamate. In terms of biological role, catalyzes the first step in hexosamine metabolism, converting fructose-6P into glucosamine-6P using glutamine as a nitrogen source. In Aeropyrum pernix (strain ATCC 700893 / DSM 11879 / JCM 9820 / NBRC 100138 / K1), this protein is Glutamine--fructose-6-phosphate aminotransferase [isomerizing].